A 257-amino-acid polypeptide reads, in one-letter code: Snake venom serine protease KN9 (257 aa).

The first 18 residues, 1–18 (MVLIRVLANLLILQLSYA), serve as a signal peptide directing secretion. Positions 19–24 (QKSSEL) are excised as a propeptide. One can recognise a Peptidase S1 domain in the interval 25-248 (VVGGDECNIN…HLDWIKSIIA (224 aa)). 5 disulfide bridges follow: C31-C162, C49-C65, C141-C209, C173-C188, and C199-C224. H64 (charge relay system) is an active-site residue. The N-linked (GlcNAc...) asparagine glycan is linked to N102. D109 functions as the Charge relay system in the catalytic mechanism. Residues N120 and N121 are each glycosylated (N-linked (GlcNAc...) asparagine). The Charge relay system role is filled by S203.

Belongs to the peptidase S1 family. Snake venom subfamily. Monomer. In terms of tissue distribution, expressed by the venom gland.

It localises to the secreted. Its function is as follows. Snake venom serine protease that may act in the hemostasis system of the prey. This chain is Snake venom serine protease KN9, found in Trimeresurus stejnegeri (Chinese green tree viper).